Reading from the N-terminus, the 120-residue chain is Large ribosomal subunit protein bL20 (120 aa).

Belongs to the bacterial ribosomal protein bL20 family.

Functionally, binds directly to 23S ribosomal RNA and is necessary for the in vitro assembly process of the 50S ribosomal subunit. It is not involved in the protein synthesizing functions of that subunit. This chain is Large ribosomal subunit protein bL20, found in Mesoplasma florum (strain ATCC 33453 / NBRC 100688 / NCTC 11704 / L1) (Acholeplasma florum).